The sequence spans 318 residues: Methionyl-tRNA formyltransferase (318 aa).

Residue 112-115 participates in (6S)-5,6,7,8-tetrahydrofolate binding; the sequence is SILP.

Belongs to the Fmt family.

It carries out the reaction L-methionyl-tRNA(fMet) + (6R)-10-formyltetrahydrofolate = N-formyl-L-methionyl-tRNA(fMet) + (6S)-5,6,7,8-tetrahydrofolate + H(+). In terms of biological role, attaches a formyl group to the free amino group of methionyl-tRNA(fMet). The formyl group appears to play a dual role in the initiator identity of N-formylmethionyl-tRNA by promoting its recognition by IF2 and preventing the misappropriation of this tRNA by the elongation apparatus. The polypeptide is Methionyl-tRNA formyltransferase (Shewanella sp. (strain ANA-3)).